The following is a 585-amino-acid chain: Mitochondrial translation ATP-dependent RNA helicase mrh5 (585 aa).

Residues Pro87–Gln117 carry the Q motif motif. The Helicase ATP-binding domain occupies Asn121–Ile351. Gly134 to Ser141 lines the ATP pocket. A DEAD box motif is present at residues Asp261–Asp264. A Helicase C-terminal domain is found at Asn390–His584.

Belongs to the DEAD box helicase family. Component of the MRH5C complex, composed of mrh5, ppr4, mtf2, and sls1. Proteins mtf2 and sls1 form a subcomplex that serves as a scaffold to bring mrh5 and ppr4 together. The MRH5C complex associates with the small subunit of the mitochondrial ribosome.

Its subcellular location is the mitochondrion. The catalysed reaction is ATP + H2O = ADP + phosphate + H(+). Translation activation factor that as part of the MRH5C complex specifically recruits cox1 mRNA to the mitochondrial ribosome for translation initiation. This is Mitochondrial translation ATP-dependent RNA helicase mrh5 from Schizosaccharomyces pombe (strain 972 / ATCC 24843) (Fission yeast).